A 174-amino-acid chain; its full sequence is 2-oxo-4-hydroxy-4-carboxy-5-ureidoimidazoline decarboxylase (174 aa).

Residue histidine 67 is the Proton donor of the active site. Substrate-binding positions include proline 68, 84–88 (SQEEQ), and 119–123 (FVICA). A Microbody targeting signal motif is present at residues 172–174 (TKL).

Belongs to the OHCU decarboxylase family. As to quaternary structure, homodimer.

The protein localises to the peroxisome. It carries out the reaction 5-hydroxy-2-oxo-4-ureido-2,5-dihydro-1H-imidazole-5-carboxylate + H(+) = (S)-allantoin + CO2. It functions in the pathway purine metabolism; urate degradation; (S)-allantoin from urate: step 3/3. Functionally, catalyzes the stereoselective decarboxylation of 2-oxo-4-hydroxy-4-carboxy-5-ureidoimidazoline (OHCU) to (S)-allantoin. The polypeptide is 2-oxo-4-hydroxy-4-carboxy-5-ureidoimidazoline decarboxylase (urad) (Danio rerio (Zebrafish)).